The sequence spans 392 residues: Tyrosine--tRNA ligase (392 aa).

Positions 39–48 match the 'HIGH' region motif; the sequence is PTAPDIHIGH. The 'KMSKS' region motif lies at 223-227; that stretch reads KMSKS. Lys-226 contacts ATP. Residues 331 to 391 form the S4 RNA-binding domain; that stretch reads IGIAQLLKQA…GKRRFARVVL (61 aa).

The protein belongs to the class-I aminoacyl-tRNA synthetase family. TyrS type 2 subfamily. Homodimer.

Its subcellular location is the cytoplasm. The catalysed reaction is tRNA(Tyr) + L-tyrosine + ATP = L-tyrosyl-tRNA(Tyr) + AMP + diphosphate + H(+). Functionally, catalyzes the attachment of tyrosine to tRNA(Tyr) in a two-step reaction: tyrosine is first activated by ATP to form Tyr-AMP and then transferred to the acceptor end of tRNA(Tyr). The polypeptide is Tyrosine--tRNA ligase (Ralstonia nicotianae (strain ATCC BAA-1114 / GMI1000) (Ralstonia solanacearum)).